The sequence spans 1143 residues: DNA-directed RNA polymerase subunit beta (1143 aa).

Belongs to the RNA polymerase beta chain family. As to quaternary structure, in plastids the minimal PEP RNA polymerase catalytic core is composed of four subunits: alpha, beta, beta', and beta''. When a (nuclear-encoded) sigma factor is associated with the core the holoenzyme is formed, which can initiate transcription.

Its subcellular location is the plastid. It localises to the chloroplast. It catalyses the reaction RNA(n) + a ribonucleoside 5'-triphosphate = RNA(n+1) + diphosphate. In terms of biological role, DNA-dependent RNA polymerase catalyzes the transcription of DNA into RNA using the four ribonucleoside triphosphates as substrates. This is DNA-directed RNA polymerase subunit beta from Pyropia yezoensis (Susabi-nori).